Consider the following 319-residue polypeptide: MTTQASTGLRHQTVLRDEAIDALLWRDDGIYIDGTFGRGGHSRLILERLGPGGRLIAFDKDPAAITEAGTVEDARFAIEHDSFAHLDAALDARGIGRVAGVLLDLGISSPQIDEGARGFSFRMDGPLDMRMDTTRGITAAQWLAEADERDIARVIRDYGEERFAVQIAKAIVARRRESGTRGPLDRTSELAALVAQAVKTREKGQDPATRTFQALRIHVNQELADLETGLKSAFERLEQGGRLVVISFHSLEDRIVKRFMQALARPEQSAAPEMRRAPLRAHELPAPQLRLLGRVRPSEAEVSANPRSRSAIMRVAERC.

S-adenosyl-L-methionine is bound by residues Gly39–His41, Asp59, Phe83, Asp104, and Gln111.

The protein belongs to the methyltransferase superfamily. RsmH family.

Its subcellular location is the cytoplasm. The enzyme catalyses cytidine(1402) in 16S rRNA + S-adenosyl-L-methionine = N(4)-methylcytidine(1402) in 16S rRNA + S-adenosyl-L-homocysteine + H(+). In terms of biological role, specifically methylates the N4 position of cytidine in position 1402 (C1402) of 16S rRNA. The polypeptide is Ribosomal RNA small subunit methyltransferase H (Ralstonia nicotianae (strain ATCC BAA-1114 / GMI1000) (Ralstonia solanacearum)).